We begin with the raw amino-acid sequence, 401 residues long: tRNA(Met) cytidine acetate ligase (401 aa).

ATP-binding positions include isoleucine 7–histidine 20, glycine 101, asparagine 160, and arginine 185–isoleucine 186.

It belongs to the TmcAL family.

It localises to the cytoplasm. The catalysed reaction is cytidine(34) in elongator tRNA(Met) + acetate + ATP = N(4)-acetylcytidine(34) in elongator tRNA(Met) + AMP + diphosphate. Functionally, catalyzes the formation of N(4)-acetylcytidine (ac(4)C) at the wobble position of elongator tRNA(Met), using acetate and ATP as substrates. First activates an acetate ion to form acetyladenylate (Ac-AMP) and then transfers the acetyl group to tRNA to form ac(4)C34. The polypeptide is tRNA(Met) cytidine acetate ligase (Geobacillus sp. (strain WCH70)).